We begin with the raw amino-acid sequence, 157 residues long: Dihydrofolate reductase type 5 (157 aa).

The region spanning 2-156 is the DHFR domain; the sequence is KVSLMAAKAK…INYCYQIWQK (155 aa).

Belongs to the dihydrofolate reductase family. Homodimer.

The catalysed reaction is (6S)-5,6,7,8-tetrahydrofolate + NADP(+) = 7,8-dihydrofolate + NADPH + H(+). The protein operates within cofactor biosynthesis; tetrahydrofolate biosynthesis; 5,6,7,8-tetrahydrofolate from 7,8-dihydrofolate: step 1/1. In terms of biological role, key enzyme in folate metabolism. Catalyzes an essential reaction for de novo glycine and purine synthesis, and for DNA precursor synthesis. This is Dihydrofolate reductase type 5 (dhfrV) from Escherichia coli.